Consider the following 375-residue polypeptide: Actin, cytoplasmic (375 aa).

It belongs to the actin family.

It localises to the cytoplasm. Its subcellular location is the cytoskeleton. It carries out the reaction ATP + H2O = ADP + phosphate + H(+). Actins are highly conserved proteins that are involved in various types of cell motility and are ubiquitously expressed in all eukaryotic cells. In Sterkiella nova (Ciliate), this protein is Actin, cytoplasmic (MIC-ACT-1).